Consider the following 128-residue polypeptide: D-ribose pyranase (128 aa).

The active-site Proton donor is the His20. Substrate is bound by residues Asp28, His95, and 117–119; that span reads YSN.

It belongs to the RbsD / FucU family. RbsD subfamily. In terms of assembly, homodecamer.

The protein resides in the cytoplasm. The catalysed reaction is beta-D-ribopyranose = beta-D-ribofuranose. The protein operates within carbohydrate metabolism; D-ribose degradation; D-ribose 5-phosphate from beta-D-ribopyranose: step 1/2. Functionally, catalyzes the interconversion of beta-pyran and beta-furan forms of D-ribose. This is D-ribose pyranase from Thermosipho africanus (strain TCF52B).